The sequence spans 454 residues: Bifunctional protein GlmU (454 aa).

The interval 1-228 (MSLKVIILAA…EMEVLGVNNK (228 aa)) is pyrophosphorylase. UDP-N-acetyl-alpha-D-glucosamine-binding positions include 8–11 (LAAG), Lys22, Gln73, 78–79 (GT), 100–102 (YGD), Gly138, Glu153, Asn168, and Asn226. Asp102 is a binding site for Mg(2+). Position 226 (Asn226) interacts with Mg(2+). Residues 229–249 (SQLQSLERQYQAQLAEELMEQ) are linker. The segment at 250–454 (GVTVLDASRI…IKGWQKPTKN (205 aa)) is N-acetyltransferase. Arg332 and Lys350 together coordinate UDP-N-acetyl-alpha-D-glucosamine. His362 (proton acceptor) is an active-site residue. Residues Tyr365 and Asn376 each contribute to the UDP-N-acetyl-alpha-D-glucosamine site. Residues Ala379, 385–386 (NY), Ser404, Ala422, and Arg439 contribute to the acetyl-CoA site.

This sequence in the N-terminal section; belongs to the N-acetylglucosamine-1-phosphate uridyltransferase family. The protein in the C-terminal section; belongs to the transferase hexapeptide repeat family. Homotrimer. Requires Mg(2+) as cofactor.

It is found in the cytoplasm. It catalyses the reaction alpha-D-glucosamine 1-phosphate + acetyl-CoA = N-acetyl-alpha-D-glucosamine 1-phosphate + CoA + H(+). The enzyme catalyses N-acetyl-alpha-D-glucosamine 1-phosphate + UTP + H(+) = UDP-N-acetyl-alpha-D-glucosamine + diphosphate. It functions in the pathway nucleotide-sugar biosynthesis; UDP-N-acetyl-alpha-D-glucosamine biosynthesis; N-acetyl-alpha-D-glucosamine 1-phosphate from alpha-D-glucosamine 6-phosphate (route II): step 2/2. The protein operates within nucleotide-sugar biosynthesis; UDP-N-acetyl-alpha-D-glucosamine biosynthesis; UDP-N-acetyl-alpha-D-glucosamine from N-acetyl-alpha-D-glucosamine 1-phosphate: step 1/1. It participates in bacterial outer membrane biogenesis; LPS lipid A biosynthesis. Catalyzes the last two sequential reactions in the de novo biosynthetic pathway for UDP-N-acetylglucosamine (UDP-GlcNAc). The C-terminal domain catalyzes the transfer of acetyl group from acetyl coenzyme A to glucosamine-1-phosphate (GlcN-1-P) to produce N-acetylglucosamine-1-phosphate (GlcNAc-1-P), which is converted into UDP-GlcNAc by the transfer of uridine 5-monophosphate (from uridine 5-triphosphate), a reaction catalyzed by the N-terminal domain. The protein is Bifunctional protein GlmU of Hydrogenovibrio crunogenus (strain DSM 25203 / XCL-2) (Thiomicrospira crunogena).